A 261-amino-acid chain; its full sequence is 14-3-3 protein 9 (261 aa).

Positions 239 to 261 are disordered; sequence PEDAEDAQKGDATNKAGGGEDAE.

This sequence belongs to the 14-3-3 family. In terms of assembly, homodimer.

This is 14-3-3 protein 9 (TFT9) from Solanum lycopersicum (Tomato).